The primary structure comprises 67 residues: uncharacterized protein (67 aa).

The protein belongs to the baculoviridae 8 kDa protein family.

This is an uncharacterized protein from Autographa californica nuclear polyhedrosis virus (AcMNPV).